Consider the following 457-residue polypeptide: uncharacterized protein (457 aa).

An N-terminal signal peptide occupies residues 1–18 (MKLLISLLWSIFFSIVYS). The Lumenal segment spans residues 19–173 (EKTLLNFKHY…GGLPASQFPR (155 aa)). The chain crosses the membrane as a helical span at residues 174–194 (MPISGGITIAYSVILALWMFF). At 195-207 (RFQYKHSIVTVQK) the chain is on the cytoplasmic side. A helical membrane pass occupies residues 208–228 (AIMFLLIFSCAQQAVTSIVLD). The Lumenal portion of the chain corresponds to 229–243 (TENLRNRGNFTWLGE). The helical transmembrane segment at 244 to 264 (TLVSILFACQLVLDLALLLIL) threads the bilayer. Residues 265-284 (SWGYTRYSTNMRDRLFTEAK) are Cytoplasmic-facing. The chain crosses the membrane as a helical span at residues 285 to 305 (IPLIICFFALFVVRFFAITIQ). The Lumenal segment spans residues 306-314 (SIHLGLWFC). The chain crosses the membrane as a helical span at residues 315-335 (FFFLTACISALYILFGAFVAL). The Cytoplasmic segment spans residues 336–358 (PSTLRALVEQRYYTLHSIYKIFR). The chain crosses the membrane as a helical span at residues 359–379 (IMVLCGVVTIFSFSLVALIFC). Residues 380 to 457 (SNTNNNSTNK…EEDIRADKSK (78 aa)) are Lumenal-facing.

It belongs to the LU7TM family.

Its subcellular location is the endoplasmic reticulum membrane. This is an uncharacterized protein from Schizosaccharomyces pombe (strain 972 / ATCC 24843) (Fission yeast).